We begin with the raw amino-acid sequence, 1135 residues long: DNA-directed RNA polymerase subunit beta' (1135 aa).

Zn(2+) is bound by residues C60, C62, C75, and C78. D450, D452, and D454 together coordinate Mg(2+). Positions 795, 869, 876, and 879 each coordinate Zn(2+).

Belongs to the RNA polymerase beta' chain family. As to quaternary structure, the RNAP catalytic core consists of 2 alpha, 1 beta, 1 beta' and 1 omega subunit. When a sigma factor is associated with the core the holoenzyme is formed, which can initiate transcription. It depends on Mg(2+) as a cofactor. Zn(2+) serves as cofactor.

It catalyses the reaction RNA(n) + a ribonucleoside 5'-triphosphate = RNA(n+1) + diphosphate. DNA-dependent RNA polymerase catalyzes the transcription of DNA into RNA using the four ribonucleoside triphosphates as substrates. The polypeptide is DNA-directed RNA polymerase subunit beta' (Clostridium tetani (strain Massachusetts / E88)).